Here is a 121-residue protein sequence, read N- to C-terminus: Large ribosomal subunit protein bL12 (121 aa).

This sequence belongs to the bacterial ribosomal protein bL12 family. As to quaternary structure, homodimer. Part of the ribosomal stalk of the 50S ribosomal subunit. Forms a multimeric L10(L12)X complex, where L10 forms an elongated spine to which 2 to 4 L12 dimers bind in a sequential fashion. Binds GTP-bound translation factors.

Functionally, forms part of the ribosomal stalk which helps the ribosome interact with GTP-bound translation factors. Is thus essential for accurate translation. This Limosilactobacillus reuteri (strain DSM 20016) (Lactobacillus reuteri) protein is Large ribosomal subunit protein bL12.